The chain runs to 281 residues: Large ribosomal subunit protein uL2 (281 aa).

Residues 224–281 (RGSAMNPNDHPHGGGEGHQPIGRKSPMTPWGKKALGVKTRKTKKASNQFIIRRRKESK) are disordered.

It belongs to the universal ribosomal protein uL2 family. As to quaternary structure, part of the 50S ribosomal subunit. Forms a bridge to the 30S subunit in the 70S ribosome.

Functionally, one of the primary rRNA binding proteins. Required for association of the 30S and 50S subunits to form the 70S ribosome, for tRNA binding and peptide bond formation. It has been suggested to have peptidyltransferase activity; this is somewhat controversial. Makes several contacts with the 16S rRNA in the 70S ribosome. This is Large ribosomal subunit protein uL2 from Metamycoplasma arthritidis (strain 158L3-1) (Mycoplasma arthritidis).